A 145-amino-acid chain; its full sequence is 3-dehydroquinate dehydratase (145 aa).

The active-site Proton acceptor is the tyrosine 22. Asparagine 71, histidine 77, and aspartate 84 together coordinate substrate. Histidine 97 serves as the catalytic Proton donor. Residues 98-99 (LS) and arginine 108 contribute to the substrate site.

This sequence belongs to the type-II 3-dehydroquinase family. Homododecamer.

The enzyme catalyses 3-dehydroquinate = 3-dehydroshikimate + H2O. Its pathway is metabolic intermediate biosynthesis; chorismate biosynthesis; chorismate from D-erythrose 4-phosphate and phosphoenolpyruvate: step 3/7. Catalyzes a trans-dehydration via an enolate intermediate. The polypeptide is 3-dehydroquinate dehydratase (Francisella philomiragia subsp. philomiragia (strain ATCC 25017 / CCUG 19701 / FSC 153 / O#319-036)).